The chain runs to 1394 residues: DNA-directed RNA polymerase subunit beta' (1394 aa).

Residues C71, C73, C86, and C89 each contribute to the Zn(2+) site. Residues D462, D464, and D466 each contribute to the Mg(2+) site. Zn(2+) contacts are provided by C810, C884, C891, and C894.

The protein belongs to the RNA polymerase beta' chain family. As to quaternary structure, the RNAP catalytic core consists of 2 alpha, 1 beta, 1 beta' and 1 omega subunit. When a sigma factor is associated with the core the holoenzyme is formed, which can initiate transcription. Requires Mg(2+) as cofactor. It depends on Zn(2+) as a cofactor.

It catalyses the reaction RNA(n) + a ribonucleoside 5'-triphosphate = RNA(n+1) + diphosphate. Its function is as follows. DNA-dependent RNA polymerase catalyzes the transcription of DNA into RNA using the four ribonucleoside triphosphates as substrates. This is DNA-directed RNA polymerase subunit beta' from Caulobacter sp. (strain K31).